Consider the following 238-residue polypeptide: Uridylate kinase (238 aa).

12–15 (KLSG) contributes to the ATP binding site. Residues 20 to 25 (GEKGFG) are involved in allosteric activation by GTP. Gly-54 serves as a coordination point for UMP. 2 residues coordinate ATP: Gly-55 and Arg-59. UMP contacts are provided by residues Asp-72 and 133–140 (TGNPYFST). ATP-binding residues include Tyr-166 and Asp-169.

Belongs to the UMP kinase family. As to quaternary structure, homohexamer.

It is found in the cytoplasm. It carries out the reaction UMP + ATP = UDP + ADP. The protein operates within pyrimidine metabolism; CTP biosynthesis via de novo pathway; UDP from UMP (UMPK route): step 1/1. Its activity is regulated as follows. Allosterically activated by GTP. Inhibited by UTP. Its function is as follows. Catalyzes the reversible phosphorylation of UMP to UDP. This chain is Uridylate kinase, found in Clostridium botulinum (strain Langeland / NCTC 10281 / Type F).